A 465-amino-acid chain; its full sequence is GTPase Der (465 aa).

2 EngA-type G domains span residues 3–167 (PLVA…PERS) and 179–352 (IHIA…VSAL). Residues 9–16 (GRPNVGKS), 57–61 (DTGGM), 119–122 (NKID), 185–192 (GRPNVGKS), 232–236 (DTAGL), and 297–300 (NKWD) contribute to the GTP site. Positions 353 to 437 (RQFSTSEVNK…PVRFLFREGD (85 aa)) constitute a KH-like domain.

The protein belongs to the TRAFAC class TrmE-Era-EngA-EngB-Septin-like GTPase superfamily. EngA (Der) GTPase family. In terms of assembly, associates with the 50S ribosomal subunit.

Functionally, GTPase that plays an essential role in the late steps of ribosome biogenesis. The sequence is that of GTPase Der from Xylella fastidiosa (strain M23).